The primary structure comprises 422 residues: Zinc-regulated transporter 2 (422 aa).

At Met1–Arg27 the chain is on the extracellular side. The helical transmembrane segment at Ile28–Ser48 threads the bilayer. At Ser49–Cys60 the chain is on the cytoplasmic side. A helical transmembrane segment spans residues Phe61 to Leu81. Over Gln82–Glu99 the chain is Extracellular. Residues Tyr100–Ile120 form a helical membrane-spanning segment. Topologically, residues Thr121–Gln262 are cytoplasmic. Phosphoserine occurs at positions 148, 149, 162, and 170. The residue at position 188 (Thr188) is a Phosphothreonine. A helical transmembrane segment spans residues Ile263–Ser283. At Leu284–Glu290 the chain is on the extracellular side. A helical transmembrane segment spans residues Phe291–Thr311. The Cytoplasmic portion of the chain corresponds to Arg312 to Pro326. A helical transmembrane segment spans residues Trp327–Val347. The Extracellular segment spans residues Arg348–Ala358. Residues Leu359 to Val379 form a helical membrane-spanning segment. Residues Glu380–Lys400 are Cytoplasmic-facing. Residues Met401–Trp421 traverse the membrane as a helical segment. Position 422 (Ala422) is a topological domain, extracellular.

Belongs to the ZIP transporter (TC 2.A.5) family.

It localises to the membrane. Its function is as follows. Low-affinity zinc transport protein. Active in zinc-replete cells and is time-, temperature- and concentration-dependent and prefers zinc over other metals as its substrate. The chain is Zinc-regulated transporter 2 (ZRT2) from Saccharomyces cerevisiae (strain ATCC 204508 / S288c) (Baker's yeast).